We begin with the raw amino-acid sequence, 329 residues long: Myoblast determination protein 1 homolog (329 aa).

The bHLH domain maps to 160–211; the sequence is DRRKAATMRERRRLRKVNEAFEVVKQRTCPNPNQRLPKVEILRSAIDYINTL. Residues 256-279 form a disordered region; the sequence is NPDGPNVYDDEDLSDTDEDRDHHH. The span at 263-273 shows a compositional bias: acidic residues; the sequence is YDDEDLSDTDE.

In terms of assembly, efficient DNA binding requires dimerization with another bHLH protein. Body wall muscle cells; in clonal muscle precursors, in a set of early embryonic blastomeres (the ms-granddaughters), and in six glial-like cells called GLRS.

It is found in the nucleus. Functionally, accumulation defines the body wall muscle cell fate during embryogenesis. The chain is Myoblast determination protein 1 homolog (hlh-1) from Caenorhabditis briggsae.